The sequence spans 264 residues: Meiotic recombination protein REC102 (264 aa).

It belongs to the TOP6B-like family. In terms of assembly, interacts with REC104; seems to form a functional unit with REC104. REC102-REC104 interacts with SKI8-SPO11 and this interaction is required for proper subcellular location of the proteins during the initiation of recombination. Interacts with MEI4, REC114 and SPO11.

It is found in the nucleus. In terms of biological role, required for formation of the SPO11-mediated double-strand breaks (DSBs) that initiate meiotic recombination. May mediate the interaction between SPO11 subunits during meiosis. Also needed for homolog chromosome pairing, synaptonemal complex formation, and for the proper timing of the first meiotic division. Not required for mitosis and mitotic DNA repair mechanisms. The sequence is that of Meiotic recombination protein REC102 from Saccharomyces cerevisiae (strain ATCC 204508 / S288c) (Baker's yeast).